Reading from the N-terminus, the 3423-residue chain is Genome polyprotein (3423 aa).

A disordered region spans residues 1–25 (MKNPKKKSGGFRIVNMLKRGVARVS). Residues 1 to 104 (MKNPKKKSGG…INARKEKKRR (104 aa)) lie on the Cytoplasmic side of the membrane. The interval 37–72 (LLLGHGPIRMVLAILAFLRFTAIKPSLGLINRWGSV) is hydrophobic; homodimerization of capsid protein C. Positions 105–122 (GTDTSVGIVGLLLTTAMA) are cleaved as a propeptide — ER anchor for capsid protein C, removed in mature form by serine protease NS3. A helical membrane pass occupies residues 105–125 (GTDTSVGIVGLLLTTAMAVEV). Residues 126–249 (TRRGNAYYMY…YTKHLIRVEN (124 aa)) lie on the Extracellular side of the membrane. N192 carries an N-linked (GlcNAc...) asparagine; by host glycan. Residues 250–269 (WIFRNPGFALAAAAIAWLLG) traverse the membrane as a helical segment. At 270–274 (SSTSQ) the chain is on the cytoplasmic side. The chain crosses the membrane as a helical span at residues 275-290 (KVIYLVMILLIAPAYS). At 291–745 (IRCIGVSNRD…HQIFGAAFKS (455 aa)) the chain is on the extracellular side. K328 is covalently cross-linked (Glycyl lysine isopeptide (Lys-Gly) (interchain with G-Cter in ubiquitin)). 2 cysteine pairs are disulfide-bonded: C350/C406 and C382/C411. The segment at 388 to 401 (DRGWGNGCGLFGKG) is fusion peptide. Residue N444 is glycosylated (N-linked (GlcNAc...) asparagine; by host). 2 disulfide bridges follow: C480/C581 and C598/C629. Residue K571 forms a Glycyl lysine isopeptide (Lys-Gly) (interchain with G-Cter in ubiquitin) linkage. The chain crosses the membrane as a helical span at residues 746–767 (LFGGMSWFSQILIGTLLVWLGL). The Cytoplasmic portion of the chain corresponds to 768-773 (NTKNGS). The helical transmembrane segment at 774–794 (ISLMCLALGGVLIFLSTAVSA) threads the bilayer. The Lumenal segment spans residues 795 to 1177 (DVGCSVDFSK…EGLKKRMTTK (383 aa)). 6 cysteine pairs are disulfide-bonded: C798–C809, C849–C937, C973–C1017, C1074–C1123, C1085–C1106, and C1107–C1110. N924 and N1001 each carry an N-linked (GlcNAc...) asparagine; by host glycan. Residues 1178–1198 (IIISTSMAVLVAMILGGFSMS) form a helical membrane-spanning segment. Residues 1199–1220 (DLAKLAILMGATFAEMNTGGDV) are Cytoplasmic-facing. The chain crosses the membrane as a helical span at residues 1221 to 1241 (AHLALIAAFKVRPALLVSFIF). The Lumenal segment spans residues 1242–1270 (RANWTPRESMLLALASCLLQTAISALEGD). A helical transmembrane segment spans residues 1271–1291 (LMVPINGFALAWLAIRAMVVP). The Cytoplasmic segment spans residues 1292–1295 (RTDN). A helical membrane pass occupies residues 1296 to 1316 (ITLAILAALTPLARGTLLVAW). Residues 1317–1345 (RAGLATCGGFMLLSLKGKGSVKKNLPFVM) are Lumenal-facing. A helical transmembrane segment spans residues 1346 to 1366 (ALGLTAVRLVDPINVVGLLLL). At 1367 to 1373 (TRSGKRS) the chain is on the cytoplasmic side. The chain crosses the membrane as a helical span at residues 1374-1394 (WPPSEVLTAVGLICALAGGFA). The Lumenal segment spans residues 1395 to 1397 (KAD). The chain crosses the membrane as a helical span at residues 1398-1418 (IEMAGPMAAVGLLIVSYVVSG). Over 1419–1472 (KSVDMYIERAGDITWEKDAEVTGNSPRLDVALDESGDFSLVEDDGPPMREIILK) the chain is Cytoplasmic. The interacts with and activates NS3 protease stretch occupies residues 1425–1464 (IERAGDITWEKDAEVTGNSPRLDVALDESGDFSLVEDDGP). The interval 1429-1451 (GDITWEKDAEVTGNSPRLDVALD) is disordered. The helical intramembrane region spans 1473–1493 (VVLMAICGMNPIAIPFAAGAW). The Lumenal portion of the chain corresponds to 1494-2170 (YVYVKTGKRS…KAAAAQLPET (677 aa)). A Peptidase S7 domain is found at 1503-1680 (SGALWDVPAP…RREEETPVEC (178 aa)). Catalysis depends on charge relay system; for serine protease NS3 activity residues H1553, D1577, and S1637. Residues 1683–1839 (PSMLKKKQLT…DSNSPIMDTE (157 aa)) form the Helicase ATP-binding domain. The tract at residues 1687–1690 (KKKQ) is important for RNA-binding. 1696–1703 (LHPGAGKT) is an ATP binding site. Positions 1787–1790 (DEAH) match the DEAH box motif. In terms of domain architecture, Helicase C-terminal spans 1834–2013 (PIMDTEVEVP…GLIASLYRPE (180 aa)). At K1891 the chain carries N6-acetyllysine; by host. Residues 2171–2191 (LETIMLLGLLGTVSLGIFFVL) traverse the membrane as a helical segment. The Lumenal segment spans residues 2192–2195 (MRNK). Residues 2196–2216 (GIGKMGFGMVTLGASAWLMWL) constitute an intramembrane region (helical). Topologically, residues 2217–2218 (SE) are cytoplasmic. The chain crosses the membrane as a helical span at residues 2219–2239 (IEPARIACVLIVVFLLLVVLI). Residues 2240–2254 (PEPEKQRSPQDNQMA) lie on the Lumenal side of the membrane. The segment at residues 2255-2269 (IIIMVAVGLLGLITA) is an intramembrane region (helical). Residues 2270–2307 (NELGWLERTKSDLSHLMGRREEGATIGFSMDIDLRPAS) lie on the Lumenal side of the membrane. An intramembrane region (helical) is located at residues 2308 to 2328 (AWAIYAALTTFITPAVQHAVT). Residues 2329–2344 (TSYNNYSLMAMATQAG) lie on the Lumenal side of the membrane. Residues 2345–2365 (VLFGMGKGMPFYAWDFGVPLL) form a helical membrane-spanning segment. At 2366–2375 (MIGCYSQLTP) the chain is on the cytoplasmic side. Residues 2376 to 2396 (LTLIVAIILLVAHYMYLIPGL) form a helical membrane-spanning segment. The Lumenal segment spans residues 2397–2441 (QAAAARAAQKRTAAGIMKNPVVDGIVVTDIDTMTIDPQVEKKMGQ). Residues 2442-2462 (VLLIAVAVSSAILSRTAWGWG) traverse the membrane as a helical segment. Residues 2463 to 3423 (EAGALITAAT…GEEGSTPGVL (961 aa)) are Cytoplasmic-facing. The region spanning 2521–2785 (GGGTGETLGE…DVNLGSGTRA (265 aa)) is the mRNA cap 0-1 NS5-type MT domain. A GTP-binding site is contributed by 2533–2539 (KARLNQM). S2576 contacts S-adenosyl-L-methionine. Phosphoserine is present on S2576. K2581 acts as the For 2'-O-MTase activity in catalysis. Positions 2597–2600 (VIDL) are SUMO-interacting motif (SIM). 10 residues coordinate S-adenosyl-L-methionine: G2606, W2607, T2624, K2625, H2630, E2631, D2651, V2652, D2666, and I2667. The active-site For 2'-O-MTase activity is the D2666. 2669 to 2675 (ESSSSPE) serves as a coordination point for GTP. The active-site For 2'-O-MTase activity is K2702. 2733–2735 (RNS) provides a ligand contact to GTP. Residue E2738 is the For 2'-O-MTase activity of the active site. Y2740 is an S-adenosyl-L-methionine binding site. Positions 2908–2914 (KHKRPRV) match the Nuclear localization signal (NLS) motif. Residues E2959, H2963, C2968, and C2971 each contribute to the Zn(2+) site. The RdRp catalytic domain occupies 3049–3199 (GRMYADDTAG…KPIDDRFAHA (151 aa)). The Zn(2+) site is built by H3234, C3250, and C3369.

It in the N-terminal section; belongs to the class I-like SAM-binding methyltransferase superfamily. mRNA cap 0-1 NS5-type methyltransferase family. In terms of assembly, homodimer. Interacts with host SERTAD3; this interaction promotes capsid protein C degradation. Interacts with host CAPRIN1; this interaction is probably linked to the inhibition of stress granules formation by the virus. Interacts with host G3BP1; this interaction is probably linked to the inhibition of stress granules formation by the virus. As to quaternary structure, forms heterodimers with envelope protein E in the endoplasmic reticulum and Golgi. Interacts with non-structural protein 2A. Homodimer; in the endoplasmic reticulum and Golgi. Interacts with host TYRO3, AXL and DC-SIGN proteins. Interacts with non-structural protein 2A. Interacts with host HAVCR1; this interaction likely mediates virus attachment to host cell. Interacts with host NCAM1. Interacts with host HSPA5. Interacts with Aedes aegypti SRPN25, APY and venom allergen-1 salivary proteins; the interactions do not affect Zika virus replication in human endothelial cells and keratinocytes. In terms of assembly, homodimer; Homohexamer when secreted. Interacts with host TBK1. Interacts with host USP8. Interacts with envelope protein E. As to quaternary structure, interacts with the structural protein prM/E complex, and the NS2B/NS3 protease complex. Forms a heterodimer with serine protease NS3. May form homooligomers. Interacts with human SPCS1. Interacts with non-structural protein 2A. In terms of assembly, forms a heterodimer with NS2B. Interacts with NS4B. Interacts with unphosphorylated RNA-directed RNA polymerase NS5; this interaction stimulates RNA-directed RNA polymerase NS5 guanylyltransferase activity. Interacts with non-structural protein 2A. Interacts with host SHFL; this interaction promotes NS3 degradation via a lysosome-dependent pathway. Interacts with host CEP63; this interaction disorganizes the centrosome and inhibits host innate immune response. As to quaternary structure, may interact with host ANKLE2; the interaction may cause defects in brain development, such as microcephaly. May interact with host SRPRA and SEC61G. Interacts with serine protease NS3. Interacts with NS1. In terms of assembly, homodimer. Interacts with host STAT2; this interaction inhibits the phosphorylation of the latter, and, when all viral proteins are present (polyprotein), targets STAT2 for degradation. Interacts with host TBK1 and IKBKE; these interactions lead to the inhibition of the host RIG-I signaling pathway. Interacts with host PAF1 complex; the interaction may prevent the recruitment of the host PAF1 complex to interferon-responsive genes, and thus reduces the immune response. Interacts with serine protease NS3. Interacts with host KPNA2. Interacts with host ZSWIM8; this interaction allows STAT2 binding to ZSWIM8 and subsequent proteasomal degradation leading to inhibition of interferon signaling. In terms of processing, specific enzymatic cleavages in vivo yield mature proteins. Cleavages in the lumen of endoplasmic reticulum are performed by host signal peptidase, whereas cleavages in the cytoplasmic side are performed by serine protease NS3. Signal cleavage at the 2K-4B site requires a prior NS3 protease-mediated cleavage at the 4A-2K site. Cleaved in post-Golgi vesicles by a host furin, releasing the mature small envelope protein M, and peptide pr. This cleavage is incomplete as up to 30% of viral particles still carry uncleaved prM. Post-translationally, N-glycosylation plays a role in virulence in mammalian and mosquito hosts, but may have no effect on neurovirulence. In terms of processing, ubiquitination by host TRIM7 promotes virus attachment and fusion of the virus and the host endosome membrane. N-glycosylated. The excreted form is glycosylated, which is required for efficient secretion of the protein from infected cells. Post-translationally, ubiquitination by host TRIM22 leads to proteasomal degradation. In terms of processing, acetylated by host KAT5. Acetylation modulates NS3 RNA-binding and unwinding activities and plays an important positive role for viral replication. Phosphorylated on serines residues. This phosphorylation may trigger NS5 nuclear localization. Post-translationally, sumoylated, required for regulating IFN induced interferon stimulated genes/ISGs.

It is found in the virion. It localises to the host nucleus. The protein resides in the host cytoplasm. Its subcellular location is the host perinuclear region. The protein localises to the secreted. It is found in the virion membrane. It localises to the host endoplasmic reticulum membrane. The protein resides in the host cell surface. The enzyme catalyses a 5'-end (5'-triphosphoguanosine)-ribonucleoside in mRNA + S-adenosyl-L-methionine = a 5'-end (N(7)-methyl 5'-triphosphoguanosine)-ribonucleoside in mRNA + S-adenosyl-L-homocysteine. It catalyses the reaction a 5'-end (N(7)-methyl 5'-triphosphoguanosine)-ribonucleoside in mRNA + S-adenosyl-L-methionine = a 5'-end (N(7)-methyl 5'-triphosphoguanosine)-(2'-O-methyl-ribonucleoside) in mRNA + S-adenosyl-L-homocysteine + H(+). The catalysed reaction is RNA(n) + a ribonucleoside 5'-triphosphate = RNA(n+1) + diphosphate. It carries out the reaction Selective hydrolysis of -Xaa-Xaa-|-Yaa- bonds in which each of the Xaa can be either Arg or Lys and Yaa can be either Ser or Ala.. The enzyme catalyses a ribonucleoside 5'-triphosphate + H2O = a ribonucleoside 5'-diphosphate + phosphate + H(+). It catalyses the reaction ATP + H2O = ADP + phosphate + H(+). In terms of biological role, plays a role in virus budding by binding to the cell membrane and gathering the viral RNA into a nucleocapsid that forms the core of the mature virus particle. During virus entry, may induce genome penetration into the host cytoplasm after hemifusion induced by the surface proteins. Can migrate to the cell nucleus where it modulates host functions. Inhibits the integrated stress response (ISR) in the infected cell. Functionally, inhibits RNA silencing by interfering with host Dicer. Its function is as follows. Prevents premature fusion activity of envelope proteins in trans-Golgi by binding to envelope protein E at pH 6.0. After virion release in extracellular space, gets dissociated from E dimers. Plays a role in host immune defense modulation and protection of envelope protein E during virion synthesis. PrM-E cleavage is inefficient, many virions are only partially matured and immature prM-E proteins could play a role in immune evasion. Contributes to fetal microcephaly in humans. Acts as a chaperone for envelope protein E during intracellular virion assembly by masking and inactivating envelope protein E fusion peptide. prM is the only viral peptide matured by host furin in the trans-Golgi network probably to avoid catastrophic activation of the viral fusion activity in acidic Golgi compartment prior to virion release. In terms of biological role, may play a role in virus budding. Exerts cytotoxic effects by activating a mitochondrial apoptotic pathway through M ectodomain. May display a viroporin activity. Functionally, binds to host cell surface receptors and mediates fusion between viral and cellular membranes. Efficient virus attachment to cell is, at least in part, mediated by host HAVCR1 in a cell-type specific manner. In addition, host NCAM1 can also be used as entry receptor. Interaction with host HSPA5 plays an important role in the early stages of infection as well. Envelope protein is synthesized in the endoplasmic reticulum and forms a heterodimer with protein prM. The heterodimer plays a role in virion budding in the ER, and the newly formed immature particle is covered with 60 spikes composed of heterodimers between precursor prM and envelope protein E. The virion is transported to the Golgi apparatus where the low pH causes the dissociation of PrM-E heterodimers and formation of E homodimers. PrM-E cleavage is inefficient, many virions are only partially matured and immature prM-E proteins could play a role in immune evasion. Its function is as follows. Plays a role in the inhibition of host RLR-induced interferon-beta activation by targeting TANK-binding kinase 1/TBK1. In addition, recruits the host deubiquitinase USP8 to cleave 'Lys-11'-linked polyubiquitin chains from caspase-1/CASP1 thus inhibiting its proteasomal degradation. In turn, stabilized CASP1 promotes cleavage of cGAS, which inhibits its ability to recognize mitochondrial DNA release and initiate type I interferon signaling. Component of the viral RNA replication complex that recruits genomic RNA, the structural protein prM/E complex, and the NS2B/NS3 protease complex to the virion assembly site and orchestrates virus morphogenesis. Also antagonizes the host alpha/beta interferon antiviral response. May disrupt adherens junction formation and thereby impair proliferation of radial cells in the host cortex. In terms of biological role, required cofactor for the serine protease function of NS3. Functionally, displays three enzymatic activities: serine protease, NTPase and RNA helicase. NS3 serine protease, in association with NS2B, performs its autocleavage and cleaves the polyprotein at dibasic sites in the cytoplasm: C-prM, NS2A-NS2B, NS2B-NS3, NS3-NS4A, NS4A-2K and NS4B-NS5. NS3 RNA helicase binds RNA and unwinds dsRNA in the 3' to 5' direction. Leads to translation arrest when expressed ex vivo. Disrupts host centrosome organization in a CEP63-dependent manner to degrade host TBK1 and inhibits innate immune response. Inhibits the integrated stress response (ISR) in the infected cell. Its function is as follows. Regulates the ATPase activity of the NS3 helicase activity. NS4A allows NS3 helicase to conserve energy during unwinding. Cooperatively with NS4B suppresses the Akt-mTOR pathway and leads to cellular dysregulation. By inhibiting host ANKLE2 functions, may cause defects in brain development, such as microcephaly. Also antagonizes the host MDA5-mediated induction of alpha/beta interferon antiviral response. Leads to translation arrest when expressed ex vivo. Inhibits the integrated stress response (ISR) in the infected cell. Functions as a signal peptide for NS4B and is required for the interferon antagonism activity of the latter. In terms of biological role, induces the formation of ER-derived membrane vesicles where the viral replication takes place. Also plays a role in the inhibition of host RLR-induced interferon-beta production at TANK-binding kinase 1/TBK1 level. Cooperatively with NS4A suppresses the Akt-mTOR pathway and leads to cellular dysregulation. Functionally, replicates the viral (+) and (-) RNA genome, and performs the capping of genomes in the cytoplasm. Methylates viral RNA cap at guanine N-7 and ribose 2'-O positions. Once sufficient NS5 is expressed, binds to the cap-proximal structure and inhibits further translation of the viral genome. Besides its role in RNA genome replication, also prevents the establishment of a cellular antiviral state by blocking the interferon-alpha/beta (IFN-alpha/beta) signaling pathway. Mechanistically, interferes with host kinases TBK1 and IKKE upstream of interferon regulatory factor 3/IRF3 to inhibit the RIG-I pathway. Also antagonizes type I interferon signaling by targeting STAT2 for degradation by the proteasome thereby preventing activation of JAK-STAT signaling pathway. Mechanistically, acts as a scaffold protein to connect host ZSWIM8/CUL3 ligase complex and STAT2, leading to STAT2 degradation. Within the host nucleus, disrupts host SUMO1 and STAT2 co-localization with PML, resulting in PML degradation. May also reduce immune responses by preventing the recruitment of the host PAF1 complex to interferon-responsive genes. This is Genome polyprotein from Zika virus (isolate ZIKV/Human/Cambodia/FSS13025/2010) (ZIKV).